We begin with the raw amino-acid sequence, 343 residues long: Fe-S cluster assembly protein DRE2 (343 aa).

The N-terminal SAM-like domain stretch occupies residues 1-188 (MTVSRDSLVL…KKLTKKVSAI (188 aa)). The tract at residues 189-240 (KLTDSDLEDDDDDLESDDSANNSKTKFFDDFDDPETGDSIDEDDLIAETEED) is linker. Acidic residues-rich tracts occupy residues 195–206 (LEDDDDDLESDD) and 218–228 (DFDDPETGDSI). The segment at 195–228 (LEDDDDDLESDDSANNSKTKFFDDFDDPETGDSI) is disordered. The [2Fe-2S] cluster site is built by Cys-247, Cys-258, Cys-261, and Cys-263. Positions 247–263 (CGKSKQRRRKACKDCSC) are fe-S binding site A. Cys-306, Cys-309, Cys-317, and Cys-320 together coordinate [4Fe-4S] cluster. 2 short sequence motifs (cx2C motif) span residues 306 to 309 (CGSC) and 317 to 320 (CSGC). A fe-S binding site B region spans residues 306–320 (CGSCALGDAFRCSGC).

The protein belongs to the anamorsin family. Monomer. Interacts with TAH18. Interacts with MIA40. [2Fe-2S] cluster is required as a cofactor. It depends on [4Fe-4S] cluster as a cofactor.

It localises to the cytoplasm. The protein resides in the mitochondrion intermembrane space. In terms of biological role, component of the cytosolic iron-sulfur (Fe-S) protein assembly (CIA) machinery required for the maturation of extramitochondrial Fe-S proteins. Part of an electron transfer chain functioning in an early step of cytosolic Fe-S biogenesis, facilitating the de novo assembly of a [4Fe-4S] cluster on the scaffold complex CFD1-NBP35. Electrons are transferred to DRE2 from NADPH via the FAD- and FMN-containing protein TAH18. TAH18-DRE2 are also required for the assembly of the diferric tyrosyl radical cofactor of ribonucleotide reductase (RNR), probably by providing electrons for reduction during radical cofactor maturation in the catalytic small subunit RNR2. The protein is Fe-S cluster assembly protein DRE2 of Kluyveromyces lactis (strain ATCC 8585 / CBS 2359 / DSM 70799 / NBRC 1267 / NRRL Y-1140 / WM37) (Yeast).